Reading from the N-terminus, the 140-residue chain is MEVPGDRFYTKTHEWVKISENRAIIGITSYAIEQLGDITFLEVKPKGTLIKKGEVLGVVESSKTTEKIYAPVSGEIVEINRDCGVVEEGSSEVPIGLEKIVEDPYEEGWIVVLEVKGDLSSELRDLMSSEDYLKHLKEGH.

Positions 22 to 114 (RAIIGITSYA…YEEGWIVVLE (93 aa)) constitute a Lipoyl-binding domain. The residue at position 63 (lysine 63) is an N6-lipoyllysine.

It belongs to the GcvH family. The glycine cleavage system is composed of four proteins: P, T, L and H. The cofactor is (R)-lipoate.

Its function is as follows. The glycine cleavage system catalyzes the degradation of glycine. The H protein shuttles the methylamine group of glycine from the P protein to the T protein. This chain is Probable glycine cleavage system H protein, found in Korarchaeum cryptofilum (strain OPF8).